The sequence spans 302 residues: Orotidine 5'-phosphate decarboxylase (302 aa).

Lysine 105 (proton donor) is an active-site residue.

This sequence belongs to the OMP decarboxylase family. Type 2 subfamily.

The catalysed reaction is orotidine 5'-phosphate + H(+) = UMP + CO2. It participates in pyrimidine metabolism; UMP biosynthesis via de novo pathway; UMP from orotate: step 2/2. The protein is Orotidine 5'-phosphate decarboxylase of Rhodopirellula baltica (strain DSM 10527 / NCIMB 13988 / SH1).